Consider the following 240-residue polypeptide: Protein GUCD1 (240 aa).

This chain is Protein GUCD1 (GUCD1), found in Homo sapiens (Human).